A 904-amino-acid chain; its full sequence is Dual specificity tyrosine-phosphorylation-regulated kinase mbk-1 (904 aa).

3 disordered regions span residues 1–151 (MNSG…MPPE), 250–272 (TVGRHTSLDSSGKPKTGKEASSS), and 285–345 (AVPN…YNNG). Over residues 9–23 (NLQAWGQQPSSSYSN) the composition is skewed to polar residues. The span at 24–35 (TQQQHGQITGQI) shows a compositional bias: low complexity. The span at 59 to 75 (ELEKSKKIAEQPTEHPQ) shows a compositional bias: basic and acidic residues. Residues 112–123 (NNSNSQNFFPQQ) show a composition bias toward low complexity. Positions 286–297 (VPNTSSSGNQPH) are enriched in polar residues. Residues 367–690 (ILSDTPVGKG…TLFPVSHTAY (324 aa)) enclose the Protein kinase domain. Residues 373–381 (VGKGSFGQV) and Lys396 each bind ATP. Catalysis depends on Asp495, which acts as the Proton acceptor. Disordered stretches follow at residues 717–830 (YRPV…DQAE) and 881–904 (MSHGNVNAGSSRDMEKHDYPNNKL). Polar residues predominate over residues 721–733 (PTSSHPISVTSSF). Low complexity predominate over residues 749 to 820 (SQQNYHNPNY…VQQHSSSSSR (72 aa)). Residues 881–890 (MSHGNVNAGS) are compositionally biased toward polar residues. The span at 892–904 (RDMEKHDYPNNKL) shows a compositional bias: basic and acidic residues.

The protein belongs to the protein kinase superfamily. CMGC Ser/Thr protein kinase family. MNB/DYRK subfamily. It depends on Mg(2+) as a cofactor.

Its subcellular location is the nucleus. The catalysed reaction is L-seryl-[protein] + ATP = O-phospho-L-seryl-[protein] + ADP + H(+). It carries out the reaction L-threonyl-[protein] + ATP = O-phospho-L-threonyl-[protein] + ADP + H(+). The enzyme catalyses L-tyrosyl-[protein] + ATP = O-phospho-L-tyrosyl-[protein] + ADP + H(+). Its function is as follows. Possible role in the function of olfactory neurons. This chain is Dual specificity tyrosine-phosphorylation-regulated kinase mbk-1, found in Caenorhabditis briggsae.